Consider the following 262-residue polypeptide: Indole-3-glycerol phosphate synthase (262 aa).

It belongs to the TrpC family.

It catalyses the reaction 1-(2-carboxyphenylamino)-1-deoxy-D-ribulose 5-phosphate + H(+) = (1S,2R)-1-C-(indol-3-yl)glycerol 3-phosphate + CO2 + H2O. It participates in amino-acid biosynthesis; L-tryptophan biosynthesis; L-tryptophan from chorismate: step 4/5. This chain is Indole-3-glycerol phosphate synthase, found in Clostridium acetobutylicum (strain ATCC 824 / DSM 792 / JCM 1419 / IAM 19013 / LMG 5710 / NBRC 13948 / NRRL B-527 / VKM B-1787 / 2291 / W).